We begin with the raw amino-acid sequence, 453 residues long: Chromosomal replication initiator protein DnaA (453 aa).

The domain I, interacts with DnaA modulators stretch occupies residues 1–74; it reads MKEKQFWNRI…GFEIYDAEIT (74 aa). Residues 74 to 113 form a domain II region; it reads TPHYIFTKPQDTTSSQVEEATNLTLYDYSPKLVSIPYSDT. The tract at residues 114–331 is domain III, AAA+ region; that stretch reads GLKEKYTFDN…GAINDITLIA (218 aa). The ATP site is built by G158, G160, K161, and T162. The tract at residues 332–453 is domain IV, binds dsDNA; that stretch reads RVKKIKDITI…EIESIKKKIK (122 aa).

This sequence belongs to the DnaA family. Oligomerizes as a right-handed, spiral filament on DNA at oriC. Interacts (via domains I and III) with CcrZ.

It localises to the cytoplasm. Its activity is regulated as follows. CcrZ stimulates DnaA, possibly by phosphorylation of an intermediate molecule, to initiate DNA replication. Its function is as follows. Plays an essential role in the initiation and regulation of chromosomal replication. ATP-DnaA binds to the origin of replication (oriC) to initiate formation of the DNA replication initiation complex once per cell cycle. Binds the DnaA box (a 9 base pair repeat at the origin) and separates the double-stranded (ds)DNA. Forms a right-handed helical filament on oriC DNA; dsDNA binds to the exterior of the filament while single-stranded (ss)DNA is stabiized in the filament's interior. The ATP-DnaA-oriC complex binds and stabilizes one strand of the AT-rich DNA unwinding element (DUE), permitting loading of DNA polymerase. After initiation quickly degrades to an ADP-DnaA complex that is not apt for DNA replication. Binds acidic phospholipids. Mutations in this gene suppress a deletion of cell cycle regulator ccrZ. In Streptococcus pneumoniae serotype 2 (strain D39 / NCTC 7466), this protein is Chromosomal replication initiator protein DnaA.